A 643-amino-acid polypeptide reads, in one-letter code: Mitochondrial Rho GTPase 2 (643 aa).

The Cytoplasmic portion of the chain corresponds to 1–611 (MMLGGKSSAG…SGRRSRNIRQ (611 aa)). In terms of domain architecture, Miro 1 spans 12 to 179 (RTSLRVAVAG…FYFASKAVLH (168 aa)). 2 EF-hand domains span residues 195–230 (RLRRAVQRIFNLCDHDLDGALNDAELNDFQVNCFGA) and 315–350 (EAMDFLSGIFQLYDLDNDGALQPAELDDLFQTAPDS). Positions 208, 210, 212, 219, 328, 330, 332, and 339 each coordinate Ca(2+). In terms of domain architecture, Miro 2 spans 423–592 (RNVFQCFVFG…FSRIVSTAEN (170 aa)). Residues 612–632 (LVNSSLLFVSVGTAVGFAGLA) form a helical membrane-spanning segment. Residues 633–643 (AYRAYSARKNA) lie on the Mitochondrial intermembrane side of the membrane.

This sequence belongs to the mitochondrial Rho GTPase family. In terms of tissue distribution, expressed roots, rosette and cauline leaves, stems, flowers and siliques.

It localises to the mitochondrion outer membrane. With respect to regulation, activated by calcium. In terms of biological role, calcium-binding mitochondrial GTPase involved in calcium signaling during salt stress response. May play a role in the progression of embryonic cell division, development of haploid male and female gametes, and pollen tube growth. The protein is Mitochondrial Rho GTPase 2 of Arabidopsis thaliana (Mouse-ear cress).